Here is a 115-residue protein sequence, read N- to C-terminus: U3-lycotoxin-Ls1g (115 aa).

The N-terminal stretch at 1 to 20 (MKFVLLFGVFLVTLFSYSSA) is a signal peptide. A propeptide spanning residues 21 to 44 (EMLDDFDQADEDELLSLIEKEEAR) is cleaved from the precursor. Disulfide bonds link C48–C63, C55–C72, C62–C87, and C74–C85.

It belongs to the neurotoxin 19 (CSTX) family. 01 subfamily. In terms of tissue distribution, expressed by the venom gland.

The protein localises to the secreted. The protein is U3-lycotoxin-Ls1g of Lycosa singoriensis (Wolf spider).